We begin with the raw amino-acid sequence, 95 residues long: Membrane protein insertion and folding monitor (95 aa).

Residues 12 to 32 (LFLVDFFTIILPALTAIGIAF) form a helical membrane-spanning segment. The interval 86–89 (DEED) is crucial for elongation arrest.

It localises to the cell membrane. Its function is as follows. Sensor protein that up-regulates translation of the secondary membrane protein insertase (MisCB/YqjG) when activity of the primary membrane protein insertase (MisCA/SpoIIIJ) is limited. Acts as a ribosome-nascent chain complex. When the primary membrane protein insertase activity or level is reduced, the membrane insertion of MifM is impaired, which induces arrest of MifM translation and unfolding of the mRNA hairpin. Unfolding leads to translation of the downstream gene, which encodes the secondary membrane protein insertase MisCB/YqjG. Translation arrest of MifM is mediated by interaction of its C-terminal domain with the ribosomal polypeptide exit tunnel. Undergoes multisite stalling, which may allow a sufficient duration of ribosomal stalling and consequently sufficient levels of MisCB/YqjG. This is Membrane protein insertion and folding monitor (mifM) from Bacillus subtilis (strain 168).